The chain runs to 523 residues: Monocarboxylate transporter 7 (523 aa).

Residues 1–21 (MTQNKLKLCSKANVYTEVPDG) lie on the Cytoplasmic side of the membrane. Residues 22–42 (GWGWAVAVSFFFVEVFTYGII) form a helical membrane-spanning segment. The Extracellular segment spans residues 43–62 (KTFGVFFNDLMDSFNESNSR). The chain crosses the membrane as a helical span at residues 63–83 (ISWIISICVFVLTFSAPLATV). The Cytoplasmic portion of the chain corresponds to 84–91 (LSNRFGHR). A helical membrane pass occupies residues 92-112 (LVVMLGGLLVSTGMVAASFSQ). The Extracellular segment spans residues 113–118 (EVSHMY). Residues 119–139 (VAIGIISGLGYCFSFLPTVTI) traverse the membrane as a helical segment. At 140–149 (LSQYFGKRRS) the chain is on the cytoplasmic side. A helical membrane pass occupies residues 150–170 (IVTAVASTGECFAVFAFAPAI). Residues 171-184 (MALKERIGWRYSLL) lie on the Extracellular side of the membrane. The helical transmembrane segment at 185–205 (FVGLLQLNIVIFGALLRPIFI) threads the bilayer. The Cytoplasmic portion of the chain corresponds to 206–299 (RGPASPKIVI…KEKSFICYAL (94 aa)). Phosphoserine is present on residues Ser234, Ser237, Ser240, and Ser247. Residues 300–320 (FGLFATLGFFAPSLYIIPLGI) traverse the membrane as a helical segment. Over 321–330 (SLGIDQDRAA) the chain is Extracellular. A helical membrane pass occupies residues 331–351 (FLLSTMAIAEVFGRIGAGFVL). At 352–358 (NREPIRK) the chain is on the cytoplasmic side. Residues 359-379 (IYIELICVILLTVSLFAFTFA) traverse the membrane as a helical segment. Residues 380–381 (TE) lie on the Extracellular side of the membrane. A helical membrane pass occupies residues 382–402 (FWGLMSCSIFFGFMVGTIGGT). Residues 403–423 (HIPLLAEDDVVGIEKMSSAAG) are Cytoplasmic-facing. A helical membrane pass occupies residues 424–444 (VYIFIQSIAGLAGPPLAGLLV). Topologically, residues 445–452 (DQSKIYSR) are extracellular. The chain crosses the membrane as a helical span at residues 453 to 473 (AFYSCAAGMALAAVCLALVRP). Residues 474–523 (CKMGLCQHHHSGETKVVSHRGKTLQDIPEDFLEMDLAKNEHRVHVQMEPV) lie on the Cytoplasmic side of the membrane.

It belongs to the major facilitator superfamily. Monocarboxylate porter (TC 2.A.1.13) family. In terms of assembly, forms functional complexes with BSG/CD147 or EMB/GP70 ancillary proteins.

The protein localises to the basolateral cell membrane. It catalyses the reaction taurine(out) = taurine(in). In terms of biological role, monocarboxylate transporter selective for taurine. May associate with BSG/CD147 or EMB/GP70 ancillary proteins to mediate facilitative efflux or influx of taurine across the plasma membrane. The transport is pH- and sodium-independent. Rather low-affinity, is likely effective for taurine transport in tissues where taurine is present at high concentrations. The polypeptide is Monocarboxylate transporter 7 (Homo sapiens (Human)).